The sequence spans 205 residues: Thiamine-phosphate synthase (205 aa).

Residues 37–41 (QVREK) and Asn-69 each bind 4-amino-2-methyl-5-(diphosphooxymethyl)pyrimidine. Residues Asp-70 and Asp-89 each contribute to the Mg(2+) site. Residue Ser-108 participates in 4-amino-2-methyl-5-(diphosphooxymethyl)pyrimidine binding. 134–136 (TGS) lines the 2-[(2R,5Z)-2-carboxy-4-methylthiazol-5(2H)-ylidene]ethyl phosphate pocket. Lys-137 contacts 4-amino-2-methyl-5-(diphosphooxymethyl)pyrimidine. Residues Gly-165 and 185 to 186 (IS) each bind 2-[(2R,5Z)-2-carboxy-4-methylthiazol-5(2H)-ylidene]ethyl phosphate.

The protein belongs to the thiamine-phosphate synthase family. Requires Mg(2+) as cofactor.

It carries out the reaction 2-[(2R,5Z)-2-carboxy-4-methylthiazol-5(2H)-ylidene]ethyl phosphate + 4-amino-2-methyl-5-(diphosphooxymethyl)pyrimidine + 2 H(+) = thiamine phosphate + CO2 + diphosphate. The enzyme catalyses 2-(2-carboxy-4-methylthiazol-5-yl)ethyl phosphate + 4-amino-2-methyl-5-(diphosphooxymethyl)pyrimidine + 2 H(+) = thiamine phosphate + CO2 + diphosphate. The catalysed reaction is 4-methyl-5-(2-phosphooxyethyl)-thiazole + 4-amino-2-methyl-5-(diphosphooxymethyl)pyrimidine + H(+) = thiamine phosphate + diphosphate. The protein operates within cofactor biosynthesis; thiamine diphosphate biosynthesis; thiamine phosphate from 4-amino-2-methyl-5-diphosphomethylpyrimidine and 4-methyl-5-(2-phosphoethyl)-thiazole: step 1/1. Condenses 4-methyl-5-(beta-hydroxyethyl)thiazole monophosphate (THZ-P) and 2-methyl-4-amino-5-hydroxymethyl pyrimidine pyrophosphate (HMP-PP) to form thiamine monophosphate (TMP). This chain is Thiamine-phosphate synthase, found in Clostridium botulinum (strain 657 / Type Ba4).